We begin with the raw amino-acid sequence, 153 residues long: Insulin-like growth factor 1 (153 aa).

The b stretch occupies residues 49–77 (GPETLCGAELVDALQFVCGDRGFYFSKPT). Disulfide bonds link Cys54–Cys96, Cys66–Cys109, and Cys95–Cys100. The c stretch occupies residues 78 to 89 (GYGSSSRRLHHK). The segment at 90-110 (GIVDECCFQSCDLRRLEMYCA) is a. Positions 111 to 118 (PIKPPKSA) are d. Positions 119-153 (RSVRAQRHTDMPKAQKEVHLKNTSRGNTGNRNYRM) are cleaved as a propeptide — e peptide. The interval 119-153 (RSVRAQRHTDMPKAQKEVHLKNTSRGNTGNRNYRM) is disordered. The span at 125–138 (RHTDMPKAQKEVHL) shows a compositional bias: basic and acidic residues. Residues 139-153 (KNTSRGNTGNRNYRM) are compositionally biased toward polar residues.

It belongs to the insulin family. Forms a ternary complex with IGFR1 and ITGAV:ITGB3. Forms a ternary complex with IGFR1 and ITGA6:ITGB4. Forms a ternary complex with IGFBP3 and ALS.

The protein resides in the secreted. Functionally, the insulin-like growth factors, isolated from plasma, are structurally and functionally related to insulin but have a much higher growth-promoting activity. Acts as a ligand for IGF1R. Binds to the alpha subunit of IGF1R, leading to the activation of the intrinsic tyrosine kinase activity which autophosphorylates tyrosine residues in the beta subunit thus initiatiating a cascade of down-stream signaling events leading to activation of the PI3K-AKT/PKB and the Ras-MAPK pathways. Binds to integrins. Its binding to integrins and subsequent ternary complex formation with integrins and IGFR1 are essential for IGF1 signaling. This Gallus gallus (Chicken) protein is Insulin-like growth factor 1.